The chain runs to 122 residues: Small ribosomal subunit protein uS13 (122 aa).

A disordered region spans residues 97–122 (PVRGQRTHTNARTRKGPARAIAGKKK).

The protein belongs to the universal ribosomal protein uS13 family. Part of the 30S ribosomal subunit. Forms a loose heterodimer with protein S19. Forms two bridges to the 50S subunit in the 70S ribosome.

Located at the top of the head of the 30S subunit, it contacts several helices of the 16S rRNA. In the 70S ribosome it contacts the 23S rRNA (bridge B1a) and protein L5 of the 50S subunit (bridge B1b), connecting the 2 subunits; these bridges are implicated in subunit movement. Contacts the tRNAs in the A and P-sites. The protein is Small ribosomal subunit protein uS13 of Bartonella bacilliformis (strain ATCC 35685 / KC583 / Herrer 020/F12,63).